The following is a 103-amino-acid chain: NADH-quinone oxidoreductase subunit K (103 aa).

3 helical membrane passes run 6–26, 30–50, and 66–86; these read IEYY…GFLL, LLVL…TLVA, and FFVI…VLAF.

It belongs to the complex I subunit 4L family. In terms of assembly, NDH-1 is composed of 14 different subunits. Subunits NuoA, H, J, K, L, M, N constitute the membrane sector of the complex.

The protein resides in the cell inner membrane. It catalyses the reaction a quinone + NADH + 5 H(+)(in) = a quinol + NAD(+) + 4 H(+)(out). In terms of biological role, NDH-1 shuttles electrons from NADH, via FMN and iron-sulfur (Fe-S) centers, to quinones in the respiratory chain. The immediate electron acceptor for the enzyme in this species is believed to be ubiquinone. Couples the redox reaction to proton translocation (for every two electrons transferred, four hydrogen ions are translocated across the cytoplasmic membrane), and thus conserves the redox energy in a proton gradient. The protein is NADH-quinone oxidoreductase subunit K of Sorangium cellulosum (strain So ce56) (Polyangium cellulosum (strain So ce56)).